Reading from the N-terminus, the 145-residue chain is 3-dehydroquinate dehydratase (145 aa).

Residue Tyr-23 is the Proton acceptor of the active site. Substrate contacts are provided by Asn-75, His-81, and Asp-88. Catalysis depends on His-101, which acts as the Proton donor. Residues 102–103 and Arg-112 contribute to the substrate site; that span reads LS.

The protein belongs to the type-II 3-dehydroquinase family. Homododecamer.

The enzyme catalyses 3-dehydroquinate = 3-dehydroshikimate + H2O. The protein operates within metabolic intermediate biosynthesis; chorismate biosynthesis; chorismate from D-erythrose 4-phosphate and phosphoenolpyruvate: step 3/7. Its function is as follows. Catalyzes a trans-dehydration via an enolate intermediate. This is 3-dehydroquinate dehydratase from Legionella pneumophila (strain Paris).